The sequence spans 301 residues: Homoserine O-acetyltransferase (301 aa).

Residue Cys-142 is the Acyl-thioester intermediate of the active site. The substrate site is built by Lys-163 and Ser-192. The active-site Proton acceptor is the His-235. The active site involves Glu-237. Arg-249 contacts substrate.

The protein belongs to the MetA family.

It is found in the cytoplasm. It catalyses the reaction L-homoserine + acetyl-CoA = O-acetyl-L-homoserine + CoA. The protein operates within amino-acid biosynthesis; L-methionine biosynthesis via de novo pathway; O-acetyl-L-homoserine from L-homoserine: step 1/1. Functionally, transfers an acetyl group from acetyl-CoA to L-homoserine, forming acetyl-L-homoserine. The polypeptide is Homoserine O-acetyltransferase (Bacillus cereus (strain 03BB102)).